We begin with the raw amino-acid sequence, 129 residues long: Follitropin subunit beta (129 aa).

The first 18 residues, 1–18 (MKSVQFCFLFCCWRATCC), serve as a signal peptide directing secretion. Disulfide bonds link C21–C69, C35–C84, C38–C122, C46–C100, C50–C102, and C105–C112. 2 N-linked (GlcNAc...) asparagine glycosylation sites follow: N25 and N42.

This sequence belongs to the glycoprotein hormones subunit beta family. As to quaternary structure, heterodimer. The active follitropin is a heterodimer composed of an alpha chain/CGA shared with other hormones and a unique beta chain/FSHB shown here.

It is found in the secreted. In terms of biological role, together with the alpha chain CGA constitutes follitropin, the follicle-stimulating hormone, and provides its biological specificity to the hormone heterodimer. Binds FSHR, a G protein-coupled receptor, on target cells to activate downstream signaling pathways. Follitropin is involved in follicle development and spermatogenesis in reproductive organs. In Cervus nippon (Sika deer), this protein is Follitropin subunit beta (FSHB).